Here is a 2027-residue protein sequence, read N- to C-terminus: Mediator of RNA polymerase II transcription subunit 12 (2027 aa).

Position 13 is a phosphotyrosine (tyrosine 13). Disordered regions lie at residues 170–191 (QSTS…TPST), 474–516 (GAPG…MDID), 538–563 (MPCE…PPKE), and 1088–1113 (TVTG…QGGR). 4 positions are modified to phosphoserine: serine 482, serine 512, serine 545, and serine 547. The span at 549–563 (EKPDVEKEVKPPPKE) shows a compositional bias: basic and acidic residues. Phosphoserine occurs at positions 1105 and 1116. The span at 1241 to 1258 (AETGSSSGSTASNMPSSS) shows a compositional bias: low complexity. 3 disordered regions span residues 1241 to 1262 (AETG…KTKP), 1297 to 1321 (ELEK…KSMS), and 1585 to 1676 (YLEP…PGSI). 2 stretches are compositionally biased toward basic and acidic residues: residues 1297 to 1316 (ELEK…DRQK) and 1605 to 1618 (EPEK…KTDK). Positions 1463–1901 (LAKKLQKELG…VRSTAILPEQ (439 aa)) are interaction with CTNNB1 and GLI3. The segment covering 1631–1640 (KKSTKGKKRS) has biased composition (basic residues). Lysine 1645 carries the post-translational modification N6-acetyllysine. Arginine 1746 is modified (asymmetric dimethylarginine; alternate). At arginine 1746 the chain carries Omega-N-methylarginine; alternate. Arginine 1757 bears the Omega-N-methylarginine mark. A disordered region spans residues 1805–1848 (QHTGPAGTMVPPSYSSQPYQSTHPSTNPTLVDPTRHLQQRPSGY). Low complexity predominate over residues 1815-1830 (PPSYSSQPYQSTHPST). Residues arginine 1844 and arginine 1865 each carry the asymmetric dimethylarginine modification. Low complexity-rich tracts occupy residues 1965 to 1975 (QHQQQQQQQAA), 1983 to 1999 (SQPQ…QQQQ), and 2008 to 2021 (LQQQ…QPST). 2 disordered regions span residues 1965 to 1999 (QHQQ…QQQQ) and 2008 to 2027 (LQQQ…FGRY).

The protein belongs to the Mediator complex subunit 12 family. Component of the Mediator complex, which is composed of MED1, MED4, MED6, MED7, MED8, MED9, MED10, MED11, MED12, MED13, MED13L, MED14, MED15, MED16, MED17, MED18, MED19, MED20, MED21, MED22, MED23, MED24, MED25, MED26, MED27, MED29, MED30, MED31, CCNC, CDK8 and CDC2L6/CDK11. The MED12, MED13, CCNC and CDK8 subunits form a distinct module termed the CDK8 module. Mediator containing the CDK8 module is less active than Mediator lacking this module in supporting transcriptional activation. Individual preparations of the Mediator complex lacking one or more distinct subunits have been variously termed ARC, CRSP, DRIP, PC2, SMCC and TRAP. Also interacts with CTNNB1 and GLI3.

It is found in the nucleus. In terms of biological role, component of the Mediator complex, a coactivator involved in the regulated transcription of nearly all RNA polymerase II-dependent genes. Mediator functions as a bridge to convey information from gene-specific regulatory proteins to the basal RNA polymerase II transcription machinery. Mediator is recruited to promoters by direct interactions with regulatory proteins and serves as a scaffold for the assembly of a functional preinitiation complex with RNA polymerase II and the general transcription factors. This subunit may specifically regulate transcription of targets of the Wnt signaling pathway and SHH signaling pathway. This is Mediator of RNA polymerase II transcription subunit 12 (MED12) from Pan troglodytes (Chimpanzee).